The sequence spans 112 residues: ATP synthase epsilon chain (112 aa).

Belongs to the ATPase epsilon chain family. In terms of assembly, F-type ATPases have 2 components, CF(1) - the catalytic core - and CF(0) - the membrane proton channel. CF(1) has five subunits: alpha(3), beta(3), gamma(1), delta(1), epsilon(1). CF(0) has three main subunits: a, b and c.

The protein resides in the cell inner membrane. Functionally, produces ATP from ADP in the presence of a proton gradient across the membrane. In Rickettsia prowazekii (strain Madrid E), this protein is ATP synthase epsilon chain (atpC).